A 144-amino-acid chain; its full sequence is Large ribosomal subunit protein uL16 (144 aa).

The protein belongs to the universal ribosomal protein uL16 family. Part of the 50S ribosomal subunit.

Its function is as follows. Binds 23S rRNA and is also seen to make contacts with the A and possibly P site tRNAs. This Erythrobacter litoralis (strain HTCC2594) protein is Large ribosomal subunit protein uL16.